Consider the following 573-residue polypeptide: MTAEGLLQILLYLGLLAAVTPLLGRYMARVFEGERTLPGIVLGPLERGLYRIAGIDPAREQHWTGYTLALLSFNLLGLLLLYALLRFQALLPLNPAELGPVGPDLAFNTAVSFTTNTNWQSYGGETTLSYLSQMLGLTVQNFVSAATGIAVAVALIRGFARRAGKTVGNFWADLVRATLYVLLPLAFLGALVLVWQGVPQNFDAYVTATTLEGGNQVLAQGPAASQIAIKQLGSNGGGFFNVNSAHPYENPTALTNLLESFYLLMIAAALIYSFGRMVGDTRQGRALWTAVFILFVAGLAVTWWAEAQGNPAVTALGVETTDGNMEGKEVRYGTALSALWAVATTAASNGSVNAMHDSFMPLGGMVPMLNMMLGEVIYGGVGAGLYGLLVFVILAVFIAGLMVGRTPEYLGKKIEAREIKLAVIAVLVFPLGILGGAALTTVVPQMLASVQDPGPHGLSEILYAYTSATGNNGSAFAGFGANTPWHNTGLGLAMLLGRFAVIVPTLAIAGSLVAKRAAPAGPGTLPTHGTLFITLLIATILIVGGLTFFPALALGPIAEHLSLTAGTLFGAVP.

The next 10 membrane-spanning stretches (helical) occupy residues Ala-3–Leu-23, Gly-65–Leu-85, Gly-136–Ile-156, Leu-179–Pro-199, Leu-254–Phe-274, Ala-286–Glu-306, Ala-383–Val-403, Val-423–Val-443, Gly-489–Ala-509, and Leu-531–Ala-551.

This sequence belongs to the KdpA family. The system is composed of three essential subunits: KdpA, KdpB and KdpC.

It is found in the cell inner membrane. Its function is as follows. Part of the high-affinity ATP-driven potassium transport (or Kdp) system, which catalyzes the hydrolysis of ATP coupled with the electrogenic transport of potassium into the cytoplasm. This subunit binds the periplasmic potassium ions and delivers the ions to the membrane domain of KdpB through an intramembrane tunnel. This Rhodospirillum centenum (strain ATCC 51521 / SW) protein is Potassium-transporting ATPase potassium-binding subunit.